The primary structure comprises 360 residues: Phospho-N-acetylmuramoyl-pentapeptide-transferase (360 aa).

Over 1–25 the chain is Periplasmic; that stretch reads MLVWLAEHLVKYYSGFNVFSYLTFR. Residues 26–46 traverse the membrane as a helical segment; it reads AIVSLLTALFISLWMGPRMIA. The Cytoplasmic portion of the chain corresponds to 47 to 71; it reads RLQKLSFGQVVRNDGPESHFSKRGT. Residues 72 to 92 form a helical membrane-spanning segment; that stretch reads PTMGGIMILTAIVISVLLWAY. Residue Pro-93 is a topological domain, periplasmic. Residues 94–114 traverse the membrane as a helical segment; it reads SNPYVWCVLVVLIGYGIIGFV. Topologically, residues 115–131 are cytoplasmic; the sequence is DDYRKVVRKDTKGLIAR. Residues 132–152 form a helical membrane-spanning segment; sequence WKYFWMSVIALGVAFALYLVG. The Periplasmic segment spans residues 153 to 167; it reads KDTPVTQLVVPFFKD. A helical transmembrane segment spans residues 168 to 188; it reads VMPQLGLFYILLSYFVIVGTG. Topologically, residues 189 to 198 are cytoplasmic; sequence NAVNLTDGLD. The chain crosses the membrane as a helical span at residues 199-219; that stretch reads GLAIMPTVFVAAGFALVAWAT. Over 220-235 the chain is Periplasmic; sequence GNMNFANYLHIPYLRH. The helical transmembrane segment at 236–256 threads the bilayer; that stretch reads AGELVIVCTAIVGAGLGFLWF. Topologically, residues 257–262 are cytoplasmic; it reads NTYPAQ. The chain crosses the membrane as a helical span at residues 263–283; sequence VFMGDVGSLALGGALGIIAVL. Over 284-287 the chain is Periplasmic; sequence LRQE. Residues 288–308 traverse the membrane as a helical segment; it reads FLLVIMGGVFVVETLSVILQV. Over 309–337 the chain is Cytoplasmic; it reads GSFKLRGQRIFRMAPIHHHYELKGWPEPR. A helical membrane pass occupies residues 338-358; the sequence is VIVRFWIISLMLVLIGLATLK. Over 359 to 360 the chain is Periplasmic; it reads VR.

It belongs to the glycosyltransferase 4 family. MraY subfamily. Requires Mg(2+) as cofactor.

The protein localises to the cell inner membrane. It catalyses the reaction UDP-N-acetyl-alpha-D-muramoyl-L-alanyl-gamma-D-glutamyl-meso-2,6-diaminopimeloyl-D-alanyl-D-alanine + di-trans,octa-cis-undecaprenyl phosphate = di-trans,octa-cis-undecaprenyl diphospho-N-acetyl-alpha-D-muramoyl-L-alanyl-D-glutamyl-meso-2,6-diaminopimeloyl-D-alanyl-D-alanine + UMP. Its pathway is cell wall biogenesis; peptidoglycan biosynthesis. Its function is as follows. Catalyzes the initial step of the lipid cycle reactions in the biosynthesis of the cell wall peptidoglycan: transfers peptidoglycan precursor phospho-MurNAc-pentapeptide from UDP-MurNAc-pentapeptide onto the lipid carrier undecaprenyl phosphate, yielding undecaprenyl-pyrophosphoryl-MurNAc-pentapeptide, known as lipid I. The sequence is that of Phospho-N-acetylmuramoyl-pentapeptide-transferase from Salmonella paratyphi C (strain RKS4594).